A 285-amino-acid polypeptide reads, in one-letter code: Cyclin-Y-like protein 1B (285 aa).

Residues 111-209 (PKRNCIFRHF…CFLELLEFNI (99 aa)) enclose the Cyclin N-terminal domain.

Belongs to the cyclin family. Cyclin Y subfamily.

The protein is Cyclin-Y-like protein 1B of Homo sapiens (Human).